The chain runs to 333 residues: Phosphate acyltransferase (333 aa).

Belongs to the PlsX family. Homodimer. Probably interacts with PlsY.

Its subcellular location is the cytoplasm. It catalyses the reaction a fatty acyl-[ACP] + phosphate = an acyl phosphate + holo-[ACP]. It functions in the pathway lipid metabolism; phospholipid metabolism. Its function is as follows. Catalyzes the reversible formation of acyl-phosphate (acyl-PO(4)) from acyl-[acyl-carrier-protein] (acyl-ACP). This enzyme utilizes acyl-ACP as fatty acyl donor, but not acyl-CoA. The chain is Phosphate acyltransferase from Ligilactobacillus salivarius (strain UCC118) (Lactobacillus salivarius).